Reading from the N-terminus, the 362-residue chain is 3-isopropylmalate dehydrogenase (362 aa).

Residue 77–88 (GPKWGTGAVRPE) coordinates NAD(+). Residues Arg-95, Arg-105, Arg-134, and Asp-223 each coordinate substrate. The Mg(2+) site is built by Asp-223, Asp-248, and Asp-252. 287 to 298 (GSAPDLPKGKVN) serves as a coordination point for NAD(+).

Belongs to the isocitrate and isopropylmalate dehydrogenases family. In terms of assembly, homodimer. Mg(2+) is required as a cofactor. Requires Mn(2+) as cofactor.

It is found in the cytoplasm. It carries out the reaction (2R,3S)-3-isopropylmalate + NAD(+) = 4-methyl-2-oxopentanoate + CO2 + NADH. Its pathway is amino-acid biosynthesis; L-leucine biosynthesis; L-leucine from 3-methyl-2-oxobutanoate: step 3/4. Catalyzes the oxidation of 3-carboxy-2-hydroxy-4-methylpentanoate (3-isopropylmalate) to 3-carboxy-4-methyl-2-oxopentanoate. The product decarboxylates to 4-methyl-2 oxopentanoate. The protein is 3-isopropylmalate dehydrogenase (LEU2) of Zygosaccharomyces bailii.